Reading from the N-terminus, the 336-residue chain is UPF0104 membrane protein MJ1595 (336 aa).

9 helical membrane passes run 9–29 (STILLIISFLFILAIMAYIGL), 40–60 (NPEYVILAFILQILVSVILSA), 68–88 (ILGYSANFKNIFLLVLMGLFI), 127–147 (VLDTAIFLFFTLFVIGYFVVT), 154–174 (YLILSWIFLFSLTAIIIYLIA), 223–243 (WEVVVAIFLSVMRYIFDILKL), 245–265 (LLFLSLSYVVSVICVSAVYLI), 285–305 (VMILSFSAFNIPPSVAAAVTL), and 306–326 (LDRLVSYILPTILGYIAMLII).

It belongs to the UPF0104 family.

It localises to the cell membrane. The polypeptide is UPF0104 membrane protein MJ1595 (Methanocaldococcus jannaschii (strain ATCC 43067 / DSM 2661 / JAL-1 / JCM 10045 / NBRC 100440) (Methanococcus jannaschii)).